We begin with the raw amino-acid sequence, 591 residues long: Metastasis-associated protein MTA3 (591 aa).

A BAH domain is found at 1 to 147 (MAANMYRVGD…PSVKTLLADK (147 aa)). In terms of domain architecture, ELM2 spans 148–258 (GEIRVGPKYQ…SAISVLVPLG (111 aa)). Residues 265 to 317 (DEMEEWSASEACLFEEALEKYGKDFNDIRQDFLPWKSLTSIIEYYYMWKTTDR) form the SANT domain. The GATA-type; atypical zinc-finger motif lies at 377–404 (CESCYATQSHQWYSWGPPNMQCRLCATC). A disordered region spans residues 417-456 (PTQSDEEKSPSPTAEDPRARSHMSRQALQGMPVRNTGSPK). Residues 421–435 (DEEKSPSPTAEDPRA) are compositionally biased toward basic and acidic residues. Phosphoserine occurs at positions 425 and 427. Threonine 452 is subject to Phosphothreonine. Phosphoserine is present on serine 516.

It belongs to the metastasis-associated protein family. In terms of assembly, component of the nucleosome remodeling and deacetylase (NuRD) repressor complex, composed of core proteins MTA1, MTA2, MTA3, RBBP4, RBBP7, HDAC1, HDAC2, MBD2, MBD3, and peripherally associated proteins CDK2AP1, CDK2AP2, GATAD2A, GATAD2B, CHD3, CHD4 and CHD5. The exact stoichiometry of the NuRD complex is unknown, and some subunits such as MBD2 and MBD3, GATAD2A and GATAD2B, and CHD3, CHD4 and CHD5 define mutually exclusive NuRD complexes. Interacts with BCL6. Interacts with NACC2. Interacts with PWWP2B. In terms of tissue distribution, expressed in heart, brain, spleen, lung, liver and kidney.

It localises to the nucleus. It is found in the cytoplasm. In terms of biological role, acts as a component of the histone deacetylase NuRD complex which participates in the remodeling of chromatin. Plays a role in maintenance of the normal epithelial architecture through the repression of SNAI1 transcription in a histone deacetylase-dependent manner, and thus the regulation of E-cadherin levels. Contributes to transcriptional repression by BCL6. The sequence is that of Metastasis-associated protein MTA3 (Mta3) from Mus musculus (Mouse).